The sequence spans 425 residues: Enolase (425 aa).

(2R)-2-phosphoglycerate is bound at residue Gln-162. Glu-204 (proton donor) is an active-site residue. Asp-241, Glu-284, and Asp-311 together coordinate Mg(2+). Positions 336, 365, 366, and 387 each coordinate (2R)-2-phosphoglycerate. Lys-336 serves as the catalytic Proton acceptor.

The protein belongs to the enolase family. The cofactor is Mg(2+).

It is found in the cytoplasm. It localises to the secreted. The protein resides in the cell surface. The catalysed reaction is (2R)-2-phosphoglycerate = phosphoenolpyruvate + H2O. It functions in the pathway carbohydrate degradation; glycolysis; pyruvate from D-glyceraldehyde 3-phosphate: step 4/5. Catalyzes the reversible conversion of 2-phosphoglycerate (2-PG) into phosphoenolpyruvate (PEP). It is essential for the degradation of carbohydrates via glycolysis. The protein is Enolase of Brucella anthropi (strain ATCC 49188 / DSM 6882 / CCUG 24695 / JCM 21032 / LMG 3331 / NBRC 15819 / NCTC 12168 / Alc 37) (Ochrobactrum anthropi).